A 213-amino-acid chain; its full sequence is ATP-dependent dethiobiotin synthetase BioD 2 (213 aa).

13-18 contacts ATP; the sequence is DIGKTI. Threonine 17 is a binding site for Mg(2+). Lysine 38 is an active-site residue. Threonine 42 lines the substrate pocket. ATP contacts are provided by residues aspartate 50 and 115–118; that span reads EGAG. Mg(2+) contacts are provided by aspartate 50 and glutamate 115.

Belongs to the dethiobiotin synthetase family. Homodimer. Mg(2+) serves as cofactor.

Its subcellular location is the cytoplasm. It catalyses the reaction (7R,8S)-7,8-diammoniononanoate + CO2 + ATP = (4R,5S)-dethiobiotin + ADP + phosphate + 3 H(+). It functions in the pathway cofactor biosynthesis; biotin biosynthesis; biotin from 7,8-diaminononanoate: step 1/2. Its function is as follows. Catalyzes a mechanistically unusual reaction, the ATP-dependent insertion of CO2 between the N7 and N8 nitrogen atoms of 7,8-diaminopelargonic acid (DAPA, also called 7,8-diammoniononanoate) to form a ureido ring. This chain is ATP-dependent dethiobiotin synthetase BioD 2, found in Pasteurella multocida (strain Pm70).